The primary structure comprises 154 residues: Large ribosomal subunit protein bL17 (154 aa).

Residues 125–154 (AASQKSSKQDRAKRVQGSKKNVDAVAESAE) form a disordered region.

The protein belongs to the bacterial ribosomal protein bL17 family. As to quaternary structure, part of the 50S ribosomal subunit. Contacts protein L32.

The protein is Large ribosomal subunit protein bL17 of Chlorobium chlorochromatii (strain CaD3).